The chain runs to 651 residues: E3 SUMO-protein ligase PIAS1 (651 aa).

An N-acetylalanine modification is found at alanine 2. A required for interaction with MSX1 region spans residues 2–200; that stretch reads ADSAELKQMV…KCDFTVQVQL (199 aa). The region spanning 11-45 is the SAP domain; sequence VMSLRVSELQVLLGYAGRNKHGRKHELLTKALHLL. The short motif at 19–23 is the LXXLL motif element; it reads LQVLL. Glycyl lysine isopeptide (Lys-Gly) (interchain with G-Cter in SUMO2) cross-links involve residues lysine 40 and lysine 46. Positions 56–64 match the Nuclear localization signal motif; sequence KIKELYRRR. In terms of domain architecture, PINIT spans 124–288; it reads HLTSALHPVH…SMAVYLVKQL (165 aa). Residues lysine 137 and lysine 238 each participate in a glycyl lysine isopeptide (Lys-Gly) (interchain with G-Cter in SUMO2) cross-link. The SP-RING-type zinc-finger motif lies at 320–405; the sequence is PDSEIATTSL…LKYCTDCDEI (86 aa). Zn(2+) is bound by residues cysteine 351, histidine 353, cysteine 374, and cysteine 377. Residues 368–380 carry the Nuclear localization signal motif; that stretch reads KKPTWVCPVCDKK. Residue lysine 453 forms a Glycyl lysine isopeptide (Lys-Gly) (interchain with G-Cter in SUMO2) linkage. Positions 462 to 473 are SUMO1-binding; the sequence is LTIDSSSDEEEE. Positions 465–511 are disordered; sequence DSSSDEEEEEPPAKRTCPSLSPTSPLSNKGILSLPHQASPVSRTPSL. Phosphoserine occurs at positions 467, 468, 483, and 485. Over residues 482–491 the composition is skewed to low complexity; sequence PSLSPTSPLS. Residue threonine 487 is modified to Phosphothreonine. Phosphoserine occurs at positions 488 and 491. Residue lysine 493 forms a Glycyl lysine isopeptide (Lys-Gly) (interchain with G-Cter in SUMO2) linkage. A phosphoserine mark is found at serine 503, serine 510, and serine 522. Repeat copies occupy residues 520–523 and 557–560. A 4 X 4 AA repeats of N-T-S-L region spans residues 520–615; the sequence is NTSLIQDYRH…GSSSGSNSSL (96 aa). The stretch at 598–601 is one 3; approximate repeat; the sequence is STSL. Residues 600–630 form a disordered region; sequence SLPATNGSSSGSNSSLVSSNSLRESHGHGVA. The segment covering 605–621 has biased composition (low complexity); the sequence is NGSSSGSNSSLVSSNSL. The stretch at 612 to 615 is one 4; approximate repeat; sequence NSSL.

Belongs to the PIAS family. In terms of assembly, interacts with NR2C1; the interaction promotes its sumoylation. Interacts with DDX21, CSRP2, AXIN1, JUN, SATB2, PLAG1, TP53 and STAT1 (dimer), following IFNA1-stimulation. Interacts with SP3 (preferentially when SUMO-modified). Interacts with KLF8; the interaction results in SUMO ligation and repression of KLF8 transcriptional activity and of its cell cycle progression into G(1) phase. Interacts with CHUK/IKKA; this interaction induces PIAS1 phosphorylation. Interacts with PTK2/FAK1; the interaction promotes its sumoylation. Interacts with SUMO1, UBE2I, NCOA2 and AR. Interacts with NR2C1; the interaction promotes its sumoylation. Interacts with DDX5. Interacts with MTA1. Interacts with PML (isoform PML-12). Interacts with PRDM1. Interacts (via N-terminus) with MSX1 (via C-terminus); the interaction is required for the localization of both proteins to the nuclear periphery and specific binding of MSX1 to the core enhancer region in target gene promoters. Post-translationally, sumoylated. Expressed in kidney, heart, spleen, brain and cerebellum; weak expression, if any, in liver and lung.

The protein localises to the nucleus. Its subcellular location is the nucleus speckle. It is found in the PML body. It localises to the cytoplasm. The protein resides in the cytoskeleton. The enzyme catalyses S-ubiquitinyl-[E2 ubiquitin-conjugating enzyme]-L-cysteine + [acceptor protein]-L-lysine = [E2 ubiquitin-conjugating enzyme]-L-cysteine + N(6)-ubiquitinyl-[acceptor protein]-L-lysine.. It participates in protein modification; protein sumoylation. Functions as an E3-type small ubiquitin-like modifier (SUMO) ligase, stabilizing the interaction between UBE2I and the substrate, and as a SUMO-tethering factor. Catalyzes sumoylation of various proteins, such as CEBPB, MRE11, MTA1, PTK2 and PML. Plays a crucial role as a transcriptional coregulation in various cellular pathways, including the STAT pathway, the p53 pathway and the steroid hormone signaling pathway. In vitro, binds A/T-rich DNA. The effects of this transcriptional coregulation, transactivation or silencing, may vary depending upon the biological context. Mediates sumoylation of MRE11, stabilizing MRE11 on chromatin during end resection. Sumoylates PML (at 'Lys-65' and 'Lys-160') and PML-RAR and promotes their ubiquitin-mediated degradation. PIAS1-mediated sumoylation of PML promotes its interaction with CSNK2A1/CK2 which in turn promotes PML phosphorylation and degradation. Enhances the sumoylation of MTA1 and may participate in its paralog-selective sumoylation. Plays a dynamic role in adipogenesis by promoting the SUMOylation and degradation of CEBPB. Mediates the nuclear mobility and localization of MSX1 to the nuclear periphery, whereby MSX1 is brought into the proximity of target myoblast differentiation factor genes. Also required for the binding of MSX1 to the core enhancer region in target gene promoter regions, independent of its sumoylation activity. Capable of binding to the core enhancer region TAAT box in the MYOD1 gene promoter. The sequence is that of E3 SUMO-protein ligase PIAS1 (Pias1) from Mus musculus (Mouse).